The sequence spans 61 residues: Small ribosomal subunit protein uS14B (61 aa).

The Zn(2+) site is built by C24, C27, C40, and C43.

The protein belongs to the universal ribosomal protein uS14 family. Zinc-binding uS14 subfamily. Part of the 30S ribosomal subunit. Contacts proteins S3 and S10. Zn(2+) serves as cofactor.

Binds 16S rRNA, required for the assembly of 30S particles and may also be responsible for determining the conformation of the 16S rRNA at the A site. The chain is Small ribosomal subunit protein uS14B from Streptomyces avermitilis (strain ATCC 31267 / DSM 46492 / JCM 5070 / NBRC 14893 / NCIMB 12804 / NRRL 8165 / MA-4680).